We begin with the raw amino-acid sequence, 403 residues long: MANITLKPLCPLLEEMVQLPNHSNSSLRYIDHVSVLLHGLASLLGLVENGLILFVVGCRMRQTVVTTWVLHLALSDLLAAASLPFFTYFLAVGHSWELGTTFCKLHSSVFFLNMFASGFLLSAISLDRCLQVVRPVWAQNHRTVAAAHRVCLMLWALAVLNTVPYFVFRDTIPRRDGRIMCYYNMLLLNPGSDRDTTCDYRQKALAVSKFLLAFMVPLAIIASSHVAVSLQLHHRGRQRTGRFVRLVAAIVVAFILCWGPYHIFSLLEARAHSVTTLRQLASRGLPFVTSLAFFNSVVNPLLYVLTCPDMLHKLRRSLLTVLESVLVEDSDLSTGPGKRCRRRHRRRASSTTTPASTLLLADRFPQLRPARLIGWMRRGSAELPRRVREQSQEKQGSLSCTLD.

At 1 to 34 (MANITLKPLCPLLEEMVQLPNHSNSSLRYIDHVS) the chain is on the extracellular side. N-linked (GlcNAc...) asparagine glycans are attached at residues N3, N21, and N24. The chain crosses the membrane as a helical span at residues 35–55 (VLLHGLASLLGLVENGLILFV). Residues 56–71 (VGCRMRQTVVTTWVLH) are Cytoplasmic-facing. A helical transmembrane segment spans residues 72–92 (LALSDLLAAASLPFFTYFLAV). Over 93–104 (GHSWELGTTFCK) the chain is Extracellular. A disulfide bridge connects residues C103 and C198. Residues 105–125 (LHSSVFFLNMFASGFLLSAIS) traverse the membrane as a helical segment. The Cytoplasmic segment spans residues 126 to 147 (LDRCLQVVRPVWAQNHRTVAAA). A helical membrane pass occupies residues 148–168 (HRVCLMLWALAVLNTVPYFVF). Residues 169–209 (RDTIPRRDGRIMCYYNMLLLNPGSDRDTTCDYRQKALAVSK) lie on the Extracellular side of the membrane. Residues 210 to 230 (FLLAFMVPLAIIASSHVAVSL) traverse the membrane as a helical segment. The Cytoplasmic segment spans residues 231–245 (QLHHRGRQRTGRFVR). Residues 246-266 (LVAAIVVAFILCWGPYHIFSL) form a helical membrane-spanning segment. The Extracellular portion of the chain corresponds to 267-284 (LEARAHSVTTLRQLASRG). A helical membrane pass occupies residues 285–305 (LPFVTSLAFFNSVVNPLLYVL). Residues 306–403 (TCPDMLHKLR…KQGSLSCTLD (98 aa)) lie on the Cytoplasmic side of the membrane. The Involved in the recycling of CRTH2 motif lies at 329 to 332 (DSDL). Position 330 is a phosphoserine (S330). 2 disordered regions span residues 332-353 (LSTG…STTT) and 384-403 (PRRV…CTLD). Residues 338–348 (KRCRRRHRRRA) are compositionally biased toward basic residues. S349 carries the phosphoserine modification. Residues 393 to 403 (EKQGSLSCTLD) are compositionally biased toward polar residues.

The protein belongs to the G-protein coupled receptor 1 family. In terms of processing, phosphorylated.

The protein resides in the cell membrane. Receptor for prostaglandin D2 (PGD2). Coupled to the G(i)-protein. Receptor activation may result in pertussis toxin-sensitive decreases in cAMP levels and Ca(2+) mobilization. PI3K signaling is also implicated in mediating PTGDR2 effects. PGD2 induced receptor internalization. CRTH2 internalization can be regulated by diverse kinases such as, PKC, PKA, GRK2, GPRK5/GRK5 and GRK6. Receptor activation is responsible, at least in part, in immune regulation and allergic/inflammation responses. This Rattus norvegicus (Rat) protein is Prostaglandin D2 receptor 2 (Ptgdr2).